We begin with the raw amino-acid sequence, 132 residues long: MARDSLSDAGLHFDELNKLRILDPDVAQQTNELKEECRDFVDKIGHFQKVVGGLIELVDELAKETENEKMKAIGARNLLKSIAKQREAQQQQLYALIAEKKMQLERYRIEYEALCKVEAEQNEFIDQFNLQK.

Residues 87-114 (EAQQQQLYALIAEKKMQLERYRIEYEAL) adopt a coiled-coil conformation.

The protein resides in the golgi apparatus. It localises to the cis-Golgi network. It is found in the cytoplasm. Its subcellular location is the cytoskeleton. The protein localises to the microtubule organizing center. The protein resides in the centrosome. It localises to the centriole. It is found in the cell projection. Its subcellular location is the cilium. The protein localises to the cytoplasmic vesicle. The protein resides in the secretory vesicle. It localises to the acrosome. In terms of biological role, involved in ciliary process assembly. May play a role in the trafficking of ciliary membrane proteins from the Golgi complex to the cilium. Regulates the platelet-derived growth factor receptor-alpha (PDGFRA) signaling pathway. Plays an important role in spermatogenesis, particularly spermiogenesis, when germ cells form flagella. The chain is Intraflagellar transport protein 20 homolog (ift20) from Xenopus tropicalis (Western clawed frog).